The chain runs to 844 residues: Translation initiation factor IF-2 (844 aa).

The span at Met-1 to Lys-11 shows a compositional bias: basic and acidic residues. Disordered stretches follow at residues Met-1 to Asp-48 and Arg-79 to Leu-249. Low complexity predominate over residues Thr-21 to Gly-30. Residues Arg-79 to Glu-161 are compositionally biased toward basic and acidic residues. A compositionally biased stretch (acidic residues) spans Ala-162–Ser-175. Over residues Arg-200 to Lys-210 the composition is skewed to basic residues. A compositionally biased stretch (basic and acidic residues) spans Gly-211–Phe-237. Residues Thr-343–Thr-513 enclose the tr-type G domain. The tract at residues Gly-352–Thr-359 is G1. GTP is bound at residue Gly-352–Thr-359. Residues Gly-377 to His-381 are G2. Residues Asp-399–Gly-402 form a G3 region. GTP is bound by residues Asp-399 to His-403 and Asn-453 to Asp-456. Positions Asn-453–Asp-456 are G4. A G5 region spans residues Ser-489–Lys-491.

This sequence belongs to the TRAFAC class translation factor GTPase superfamily. Classic translation factor GTPase family. IF-2 subfamily.

Its subcellular location is the cytoplasm. In terms of biological role, one of the essential components for the initiation of protein synthesis. Protects formylmethionyl-tRNA from spontaneous hydrolysis and promotes its binding to the 30S ribosomal subunits. Also involved in the hydrolysis of GTP during the formation of the 70S ribosomal complex. This Haemophilus influenzae (strain 86-028NP) protein is Translation initiation factor IF-2.